The following is a 2009-amino-acid chain: Sodium channel protein type 1 subunit alpha (2009 aa).

Residues methionine 1–serine 128 are Cytoplasmic-facing. The segment covering arginine 28–glycine 48 has biased composition (basic and acidic residues). The segment at arginine 28–asparagine 60 is disordered. The I repeat unit spans residues isoleucine 110–glutamine 454. Residues leucine 129–threonine 146 traverse the membrane as a helical segment. Topologically, residues methionine 147 to aspartate 152 are extracellular. A helical transmembrane segment spans residues tryptophan 153–glycine 177. Residues phenylalanine 178–aspartate 188 lie on the Cytoplasmic side of the membrane. A helical membrane pass occupies residues proline 189–glutamate 205. The Extracellular segment spans residues phenylalanine 206–serine 213. Asparagine 211 carries N-linked (GlcNAc...) asparagine glycosylation. A helical membrane pass occupies residues alanine 214–threonine 235. Residues isoleucine 236–lysine 245 are Cytoplasmic-facing. Residues lysine 246–phenylalanine 269 form a helical membrane-spanning segment. The Extracellular portion of the chain corresponds to methionine 270–serine 369. 2 cysteine pairs are disulfide-bonded: cysteine 277–cysteine 345 and cysteine 336–cysteine 351. N-linked (GlcNAc...) asparagine glycosylation is found at asparagine 284, asparagine 295, asparagine 301, asparagine 306, and asparagine 338. Positions tryptophan 370–tryptophan 384 form an intramembrane region, pore-forming. Residues glutamate 385–lysine 397 lie on the Extracellular side of the membrane. A helical membrane pass occupies residues threonine 398–alanine 423. The Cytoplasmic portion of the chain corresponds to methionine 424–proline 768. The tract at residues alanine 458–serine 528 is disordered. At serine 470 the chain carries Phosphoserine. Low complexity predominate over residues leucine 479–lysine 492. The span at lysine 495 to glutamine 506 shows a compositional bias: basic residues. The segment covering lysine 507–serine 528 has biased composition (basic and acidic residues). Residues serine 523, serine 525, serine 550, serine 551, serine 607, and serine 730 each carry the phosphoserine modification. Residues valine 584–serine 628 are disordered. Residues aspartate 593–serine 607 are compositionally biased toward basic and acidic residues. One copy of the II repeat lies at cysteine 750–glycine 1022. A helical membrane pass occupies residues phenylalanine 769–methionine 787. Residues glutamate 788–asparagine 797 are Extracellular-facing. A helical membrane pass occupies residues histidine 798 to isoleucine 820. Residues alanine 821 to glutamate 830 lie on the Cytoplasmic side of the membrane. A helical membrane pass occupies residues glycine 831–leucine 849. Residues alanine 850–glycine 854 are Extracellular-facing. The helical transmembrane segment at leucine 855–proline 874 threads the bilayer. Residues threonine 875–glycine 891 lie on the Cytoplasmic side of the membrane. Residues asparagine 892–phenylalanine 912 form a helical membrane-spanning segment. At glycine 913–phenylalanine 938 the chain is on the extracellular side. Cysteines 921 and 927 form a disulfide. An intramembrane region (pore-forming) is located at residues histidine 939 to tryptophan 952. Residues isoleucine 953–glutamine 965 lie on the Extracellular side of the membrane. A disulfide bridge links cysteine 959 with cysteine 968. Residues alanine 966–leucine 992 traverse the membrane as a helical segment. Topologically, residues serine 993–asparagine 1218 are cytoplasmic. Positions threonine 1129–alanine 1163 are disordered. One copy of the III repeat lies at arginine 1200–leucine 1514. The helical transmembrane segment at tryptophan 1219–phenylalanine 1237 threads the bilayer. Residues glutamate 1238–threonine 1250 are Extracellular-facing. Residues methionine 1251 to tyrosine 1276 form a helical membrane-spanning segment. The Cytoplasmic segment spans residues glutamine 1277–threonine 1278. A helical transmembrane segment spans residues tyrosine 1279–leucine 1304. Residues glycine 1305–lysine 1313 are Extracellular-facing. Residues serine 1314–glycine 1332 form a helical membrane-spanning segment. Residues methionine 1333–proline 1345 lie on the Cytoplasmic side of the membrane. Residues serine 1346–phenylalanine 1369 form a helical membrane-spanning segment. At alanine 1370 to phenylalanine 1415 the chain is on the extracellular side. Cysteine 1376 and cysteine 1396 form a disulfide bridge. N-linked (GlcNAc...) asparagine glycosylation is found at asparagine 1378, asparagine 1392, and asparagine 1403. Positions aspartate 1416–glycine 1433 form an intramembrane region, pore-forming. Residues tryptophan 1434–leucine 1457 are Extracellular-facing. Residues tyrosine 1458–isoleucine 1483 form a helical membrane-spanning segment. The Cytoplasmic segment spans residues aspartate 1484–glutamine 1541. A Phosphoserine; by PKC modification is found at serine 1516. The stretch at isoleucine 1523 to glutamine 1821 is one IV repeat. A helical transmembrane segment spans residues valine 1542 to valine 1560. Over glutamate 1561 to serine 1571 the chain is Extracellular. The interval glutamate 1561 to serine 1571 is S1-S2 loop of repeat IV. The chain crosses the membrane as a helical span at residues isoleucine 1572 to isoleucine 1593. Over serine 1594–threonine 1601 the chain is Cytoplasmic. Residues isoleucine 1602 to glutamate 1623 traverse the membrane as a helical segment. Residues methionine 1619 to arginine 1636 form an S3b-S4 loop of repeat IV region. Over leucine 1624–arginine 1636 the chain is Extracellular. A helical membrane pass occupies residues valine 1637–glycine 1655. Topologically, residues isoleucine 1656–methionine 1665 are cytoplasmic. The chain crosses the membrane as a helical span at residues serine 1666–glycine 1688. Over methionine 1689–glycine 1711 the chain is Extracellular. The pore-forming intramembrane region spans asparagine 1712–tryptophan 1726. The Extracellular portion of the chain corresponds to aspartate 1727 to proline 1759. A disulfide bridge connects residues cysteine 1741 and cysteine 1756. Residues serine 1760–asparagine 1788 traverse the membrane as a helical segment. Residues phenylalanine 1789 to lysine 2009 lie on the Cytoplasmic side of the membrane. In terms of domain architecture, IQ spans glutamate 1915 to lysine 1944. The tract at residues tyrosine 1986 to lysine 2009 is disordered. A compositionally biased stretch (basic and acidic residues) spans arginine 1988–lysine 2009.

The protein belongs to the sodium channel (TC 1.A.1.10) family. Nav1.1/SCN1A subfamily. The Nav1.1 voltage-gated sodium channel consists of an ion-conducting alpha subunit SCN1A which is functional on its own regulated by one or more beta-1 (SCN1B), beta-2 (SCN2B), beta-3 (SCN3B) and beta-4 (SCN4B) subunits. SCN1B and SCN3B are non-covalently associated with SCN1A. SCN2B and SCN4B are disulfide-linked to SCN1A. SCN1B regulates both the expression at the plasma membrane and the voltage dependence of Nav1.1 inactivation. SCN3B and SCN4B reduce Nav1.1 conductance. Probably interacts with TMEM233; modulates the gating properties of NaV1.1. Interacts with FGF13; regulates the steady-state inactivation of Nav.1.1. In terms of processing, phosphorylation at Ser-1516 by PKC in a highly conserved cytoplasmic loop slows inactivation of the sodium channel and reduces peak sodium currents.

It localises to the cell membrane. The enzyme catalyses Na(+)(in) = Na(+)(out). Activated by the spider toxins Hm1a and Hm1b (H.maculata, AC P60992 and AC P0DOC5) eliciting acute pain and mechanical allodynia. Inhibited by the conotoxin GVIIJ. In terms of biological role, pore-forming subunit of Nav1.1, a voltage-gated sodium (Nav) channel that directly mediates the depolarizing phase of action potentials in excitable membranes. Navs, also called VGSCs (voltage-gated sodium channels) or VDSCs (voltage-dependent sodium channels), operate by switching between closed and open conformations depending on the voltage difference across the membrane. In the open conformation they allow Na(+) ions to selectively pass through the pore, along their electrochemical gradient. The influx of Na(+) ions provokes membrane depolarization, initiating the propagation of electrical signals throughout cells and tissues. By regulating the excitability of neurons, ensures that they respond appropriately to synaptic inputs, maintaining the balance between excitation and inhibition in brain neural circuits. Nav1.1 plays a role in controlling the excitability and action potential propagation from somatosensory neurons, thereby contributing to the sensory perception of mechanically-induced pain. The protein is Sodium channel protein type 1 subunit alpha of Rattus norvegicus (Rat).